The sequence spans 120 residues: MEKMGTSELLKHIYDINLSYLLLAQRIINQEKVSAMFRLGIDEAMADALASLTLPEMVKLAETNQLVCQFRFNDHQSITRLTQESRVEDLQQIHTGILLSSRLLRDVSQENKTPKKRAVS.

It belongs to the FlhD family. Homodimer; disulfide-linked. Forms a heterohexamer composed of two FlhC and four FlhD subunits. Each FlhC binds a FlhD dimer, forming a heterotrimer, and a hexamer assembles by dimerization of two heterotrimers.

It is found in the cytoplasm. Its function is as follows. Functions in complex with FlhC as a master transcriptional regulator that regulates transcription of several flagellar and non-flagellar operons by binding to their promoter region. Activates expression of class 2 flagellar genes, including fliA, which is a flagellum-specific sigma factor that turns on the class 3 genes. Also regulates genes whose products function in a variety of physiological pathways. In Erwinia tasmaniensis (strain DSM 17950 / CFBP 7177 / CIP 109463 / NCPPB 4357 / Et1/99), this protein is Flagellar transcriptional regulator FlhD.